Reading from the N-terminus, the 202-residue chain is Snake venom metalloproteinase leucurolysin-A (202 aa).

Glutamine 1 is subject to Pyrrolidone carboxylic acid. The Peptidase M12B domain maps to 6–202; sequence RYIELVVVAD…HNPQCILNKP (197 aa). The Ca(2+) site is built by glutamate 9 and aspartate 93. 3 disulfide bridges follow: cysteine 117-cysteine 197, cysteine 157-cysteine 181, and cysteine 159-cysteine 164. Histidine 142 serves as a coordination point for Zn(2+). Glutamate 143 is an active-site residue. Zn(2+) contacts are provided by histidine 146 and histidine 152. Ca(2+) contacts are provided by cysteine 197 and asparagine 200.

This sequence belongs to the venom metalloproteinase (M12B) family. P-I subfamily. Monomer. The cofactor is Zn(2+). In terms of tissue distribution, expressed by the venom gland.

It is found in the secreted. With respect to regulation, inhibited by EDTA and 2-mercaptoethanol. Inhibited by 1 mM zinc ion and to a lesser extent by 1 mM calcium ion. Functionally, non-hemorrhagic metalloproteinase that hydrolyzes the alpha chains of fibrinogen, as well as fibrin, fibronectin and casein. Beta and gamma chains are also hydrolyzed, but more slowly. Thrombolytic activity is also observed. Induces detachment of endothelial cells followed by death, and inhibits endothelial cell adhesion to fibronectin. Induces edema in mouse paw. Inhibits ADP-induced platelet aggregation on human platelet-rich plasma with an IC(50) of 2.8 uM. This is Snake venom metalloproteinase leucurolysin-A from Bothrops leucurus (Whitetail lancehead).